A 97-amino-acid polypeptide reads, in one-letter code: Protein S100-A10 (97 aa).

Residues Lys23, Lys28, Lys54, and Lys57 each carry the N6-acetyllysine modification. Residues Lys47–Ala82 form the EF-hand domain. Positions Asp60–Ser71 are ancestral calcium site.

The protein belongs to the S-100 family. Heterotetramer containing 2 light chains of S100A10/p11 and 2 heavy chains of ANXA2/p36. Interacts with SCN10A. Interacts with TASOR.

Its function is as follows. Because S100A10 induces the dimerization of ANXA2/p36, it may function as a regulator of protein phosphorylation in that the ANXA2 monomer is the preferred target (in vitro) of tyrosine-specific kinase. In Mus musculus (Mouse), this protein is Protein S100-A10 (S100a10).